Consider the following 156-residue polypeptide: 2-C-methyl-D-erythritol 2,4-cyclodiphosphate synthase (156 aa).

Positions 10 and 12 each coordinate a divalent metal cation. 4-CDP-2-C-methyl-D-erythritol 2-phosphate is bound by residues 10–12 (DSH) and 36–37 (HS). His-44 lines the a divalent metal cation pocket. 4-CDP-2-C-methyl-D-erythritol 2-phosphate-binding positions include 58 to 60 (DIG) and 63 to 67 (FKDTD).

It belongs to the IspF family. As to quaternary structure, homotrimer. The cofactor is a divalent metal cation.

The enzyme catalyses 4-CDP-2-C-methyl-D-erythritol 2-phosphate = 2-C-methyl-D-erythritol 2,4-cyclic diphosphate + CMP. It participates in isoprenoid biosynthesis; isopentenyl diphosphate biosynthesis via DXP pathway; isopentenyl diphosphate from 1-deoxy-D-xylulose 5-phosphate: step 4/6. In terms of biological role, involved in the biosynthesis of isopentenyl diphosphate (IPP) and dimethylallyl diphosphate (DMAPP), two major building blocks of isoprenoid compounds. Catalyzes the conversion of 4-diphosphocytidyl-2-C-methyl-D-erythritol 2-phosphate (CDP-ME2P) to 2-C-methyl-D-erythritol 2,4-cyclodiphosphate (ME-CPP) with a corresponding release of cytidine 5-monophosphate (CMP). The protein is 2-C-methyl-D-erythritol 2,4-cyclodiphosphate synthase of Aquifex aeolicus (strain VF5).